A 577-amino-acid polypeptide reads, in one-letter code: Isocitrate dehydrogenase kinase/phosphatase (577 aa).

Residues 315-321 (APGIRGM) and Lys336 contribute to the ATP site. Residue Asp371 is part of the active site.

It belongs to the AceK family.

The protein resides in the cytoplasm. It catalyses the reaction L-seryl-[isocitrate dehydrogenase] + ATP = O-phospho-L-seryl-[isocitrate dehydrogenase] + ADP + H(+). Bifunctional enzyme which can phosphorylate or dephosphorylate isocitrate dehydrogenase (IDH) on a specific serine residue. This is a regulatory mechanism which enables bacteria to bypass the Krebs cycle via the glyoxylate shunt in response to the source of carbon. When bacteria are grown on glucose, IDH is fully active and unphosphorylated, but when grown on acetate or ethanol, the activity of IDH declines drastically concomitant with its phosphorylation. This chain is Isocitrate dehydrogenase kinase/phosphatase, found in Escherichia fergusonii (strain ATCC 35469 / DSM 13698 / CCUG 18766 / IAM 14443 / JCM 21226 / LMG 7866 / NBRC 102419 / NCTC 12128 / CDC 0568-73).